The sequence spans 358 residues: tRNA-specific 2-thiouridylase MnmA (358 aa).

Residues 6-13 and L32 contribute to the ATP site; that span reads AMSGGVDS. The Nucleophile role is filled by C101. C101 and C193 are disulfide-bonded. G125 is an ATP binding site. The tract at residues 143–145 is interaction with tRNA; sequence KDQ. C193 (cysteine persulfide intermediate) is an active-site residue.

Belongs to the MnmA/TRMU family.

It is found in the cytoplasm. It carries out the reaction S-sulfanyl-L-cysteinyl-[protein] + uridine(34) in tRNA + AH2 + ATP = 2-thiouridine(34) in tRNA + L-cysteinyl-[protein] + A + AMP + diphosphate + H(+). Its function is as follows. Catalyzes the 2-thiolation of uridine at the wobble position (U34) of tRNA, leading to the formation of s(2)U34. The sequence is that of tRNA-specific 2-thiouridylase MnmA from Mycolicibacterium paratuberculosis (strain ATCC BAA-968 / K-10) (Mycobacterium paratuberculosis).